We begin with the raw amino-acid sequence, 61 residues long: uncharacterized protein (61 aa).

Residues 10–27 (RILFFFFIFFTLFLFNIP) traverse the membrane as a helical segment.

It localises to the membrane. This is an uncharacterized protein from Dictyostelium discoideum (Social amoeba).